A 321-amino-acid chain; its full sequence is MTSKLDQLRAMTTVVADTGDIEAVARLKPVDCTTNPTIVLKALGTPMFADAIKEAVAWGKKQGGTPDAVAAAVADRLAISVGAALSGLVPGRVSTEVDADLSFDTEASLAKARAIIAAYKERGIERDRILIKLASTWEGIRAAEVLQKEGIDCNLTLLFSKAQAVACADAKVFLISPFVGRILDWYKKSTGKDYTPEEDPGVLSVREIYNYYKANDIKTIVMGASFRSAAEVEALAGCDRLTISPNLLDELAKDEGKLERKLSPENKTSVAKIIVDEKTYRWQMNEDAMATEKLAEGIRAFAKDLGTLRAMVSKELQLAAA.

Lys132 functions as the Schiff-base intermediate with substrate in the catalytic mechanism.

Belongs to the transaldolase family. Type 1 subfamily. In terms of assembly, homodimer.

It is found in the cytoplasm. The catalysed reaction is D-sedoheptulose 7-phosphate + D-glyceraldehyde 3-phosphate = D-erythrose 4-phosphate + beta-D-fructose 6-phosphate. It participates in carbohydrate degradation; pentose phosphate pathway; D-glyceraldehyde 3-phosphate and beta-D-fructose 6-phosphate from D-ribose 5-phosphate and D-xylulose 5-phosphate (non-oxidative stage): step 2/3. Its function is as follows. Transaldolase is important for the balance of metabolites in the pentose-phosphate pathway. The sequence is that of Transaldolase from Rhizobium rhizogenes (strain K84 / ATCC BAA-868) (Agrobacterium radiobacter).